The chain runs to 168 residues: MAAESLPFAFETVSSWELEAWYEDLQEVLSSDEIGGTYISSPGNEEEESKTFTTLDPASLAWLTEEPGPAEVTSTSQSPRSPDSSQSSMAQEEEEEDQGRTRKRKQSGQCAARAGKQRMKEKEQENERKVAQLAEENERLKLEIERLTREVETTRRALIDRMVSLHQA.

Residues 10–18 (FETVSSWEL) are interaction with TRIB3. An N-terminal region spans residues 10–26 (FETVSSWELEAWYEDLQ). Phosphoserine; by CK2 occurs at positions 14, 15, 30, and 31. The interval 34-130 (IGGTYISSPG…EKEQENERKV (97 aa)) is disordered. Low complexity predominate over residues 73–88 (TSTSQSPRSPDSSQSS). Residues S78 and S81 each carry the phosphoserine; by MAPK14 modification. The region spanning 98 to 161 (QGRTRKRKQS…ETTRRALIDR (64 aa)) is the bZIP domain. Residues 100–129 (RTRKRKQSGQCAARAGKQRMKEKEQENERK) are basic motif. Residues 118–130 (RMKEKEQENERKV) are compositionally biased toward basic and acidic residues. A leucine-zipper region spans residues 133-147 (LAEENERLKLEIERL).

This sequence belongs to the bZIP family. As to quaternary structure, heterodimer. Interacts with TCF7L2/TCF4, EP300/P300, HDAC1, HDAC5 and HDAC6. Interacts with TRIB3 which blocks its association with EP300/P300. Interacts with FOXO3, CEBPB and ATF4. Post-translationally, ubiquitinated, leading to its degradation by the proteasome. In terms of processing, phosphorylation at serine residues by MAPK14 enhances its transcriptional activation activity while phosphorylation at serine residues by CK2 inhibits its transcriptional activation activity.

Its subcellular location is the cytoplasm. It is found in the nucleus. Its function is as follows. Multifunctional transcription factor in ER stress response. Plays an essential role in the response to a wide variety of cell stresses and induces cell cycle arrest and apoptosis in response to ER stress. Plays a dual role both as an inhibitor of CCAAT/enhancer-binding protein (C/EBP) function and as an activator of other genes. Acts as a dominant-negative regulator of C/EBP-induced transcription: dimerizes with members of the C/EBP family, impairs their association with C/EBP binding sites in the promoter regions, and inhibits the expression of C/EBP regulated genes. Positively regulates the transcription of TRIB3, IL6, IL8, IL23, TNFRSF10B/DR5, PPP1R15A/GADD34, BBC3/PUMA, BCL2L11/BIM and ERO1L. Negatively regulates; expression of BCL2 and MYOD1, ATF4-dependent transcriptional activation of asparagine synthetase (ASNS), CEBPA-dependent transcriptional activation of hepcidin (HAMP) and CEBPB-mediated expression of peroxisome proliferator-activated receptor gamma (PPARG). Inhibits the canonical Wnt signaling pathway by binding to TCF7L2/TCF4, impairing its DNA-binding properties and repressing its transcriptional activity. Plays a regulatory role in the inflammatory response through the induction of caspase-11 (CASP4/CASP11) which induces the activation of caspase-1 (CASP1) and both these caspases increase the activation of pro-IL1B to mature IL1B which is involved in the inflammatory response. Acts as a major regulator of postnatal neovascularization through regulation of endothelial nitric oxide synthase (NOS3)-related signaling. This Rattus norvegicus (Rat) protein is DNA damage-inducible transcript 3 protein (Ddit3).